A 331-amino-acid chain; its full sequence is Biotin synthase (331 aa).

The Radical SAM core domain occupies 52 to 277 (PEVEVEGIVS…RTILRYAGGR (226 aa)). 3 residues coordinate [4Fe-4S] cluster: C67, C71, and C74. Residues C110, C202, and R272 each coordinate [2Fe-2S] cluster.

Belongs to the radical SAM superfamily. Biotin synthase family. Homodimer. It depends on [4Fe-4S] cluster as a cofactor. [2Fe-2S] cluster is required as a cofactor.

It carries out the reaction (4R,5S)-dethiobiotin + (sulfur carrier)-SH + 2 reduced [2Fe-2S]-[ferredoxin] + 2 S-adenosyl-L-methionine = (sulfur carrier)-H + biotin + 2 5'-deoxyadenosine + 2 L-methionine + 2 oxidized [2Fe-2S]-[ferredoxin]. It participates in cofactor biosynthesis; biotin biosynthesis; biotin from 7,8-diaminononanoate: step 2/2. In terms of biological role, catalyzes the conversion of dethiobiotin (DTB) to biotin by the insertion of a sulfur atom into dethiobiotin via a radical-based mechanism. The chain is Biotin synthase from Salinispora arenicola (strain CNS-205).